Consider the following 1137-residue polypeptide: Otoancorin (1137 aa).

An N-terminal signal peptide occupies residues 1-23 (MSQGPRTCSLLLVLLLSHGGAYQ). 11 N-linked (GlcNAc...) asparagine glycosylation sites follow: N156, N211, N244, N289, N321, N380, N384, N530, N594, N740, and N798. The span at 1095-1115 (HSWQTDPLSSSPTWPASTGSP) shows a compositional bias: polar residues. The interval 1095–1119 (HSWQTDPLSSSPTWPASTGSPTGEP) is disordered. Residue G1113 is the site of GPI-anchor amidated glycine attachment. Positions 1114-1137 (SPTGEPASQALWLGCTLLLLTAKS) are cleaved as a propeptide — removed in mature form.

The protein belongs to the stereocilin family. In terms of tissue distribution, expressed in the inner ear and vestibule.

It is found in the apical cell membrane. The protein resides in the secreted. The protein localises to the extracellular space. It localises to the extracellular matrix. Functionally, may act as an adhesion molecule. In Mus musculus (Mouse), this protein is Otoancorin (Otoa).